The primary structure comprises 174 residues: MKKVVKYLISLILAIIIVLFVQTFVIVGHVIPNNDMSPTLNKGDRVIVNKIKVTFNQLNNGDIITYRRGNEIYTSRIIAKPGQSMAFRQGQLYRDDRPVDASYAKNRKIKDFSLRNFKELDGDIIPPNNFVVLNDHDNNQHDSRQFGLIDKKDIIGNISLRYYPFSKWTIQFKS.

At 1 to 7 (MKKVVKY) the chain is on the cytoplasmic side. Residues 8-28 (LISLILAIIIVLFVQTFVIVG) traverse the membrane as a helical segment. Residues 29–174 (HVIPNNDMSP…FSKWTIQFKS (146 aa)) are Extracellular-facing.

This sequence belongs to the peptidase S26 family.

Its subcellular location is the cell membrane. Catalytically inactive. The protein is Inactive signal peptidase IA (spsA) of Staphylococcus aureus (strain Mu50 / ATCC 700699).